Reading from the N-terminus, the 281-residue chain is Arylamine N-acetyltransferase (281 aa).

Cys-69 serves as the catalytic Acyl-thioester intermediate. Catalysis depends on residues His-107 and Asp-122. 2 positions are modified to N6-acetyllysine: Lys-214 and Lys-281.

This sequence belongs to the arylamine N-acetyltransferase family. As to quaternary structure, homodimer. Acetylated on Lys-214 and Lys-281. Deacetylated by CobB.

The protein localises to the cytoplasm. The catalysed reaction is an arylamine + acetyl-CoA = an N-acetylarylamine + CoA. The enzyme catalyses an N-hydroxyarylamine + acetyl-CoA = an N-acetoxyarylamine + CoA. Its activity is regulated as follows. Inhibited by salicylic acid, acetylsalicylic acid, 2,6-dichrolo-4-nitrophenol, N-ethylmaleimide and iodoacetamide. In terms of biological role, catalyzes the acetyl-CoA-dependent N-acetylation of aromatic amines, and, probably, the O-acetylation of N-hydroxyarylamines. In vitro, catalyzes the N-acetylation of various arylamines such as aminobenzoic acid, aminophenol, aminotoluene, phenetidine, anisidine, aniline, isoniazid and 2-amino-fluorene. N-hydroxyarylamine O-acetyltransferase activity has not been assayed directly, however, NhoA activity is required for the mutagenicity of nitroaromatic compounds, suggesting that it also has O-acetyltransferase activity. This Escherichia coli (strain K12) protein is Arylamine N-acetyltransferase (nhoA).